The chain runs to 126 residues: Protein ApaG (126 aa).

The ApaG domain occupies 2-126; that stretch reads SALDNSIRVE…FRLATPGLLH (125 aa).

The protein is Protein ApaG of Shewanella oneidensis (strain ATCC 700550 / JCM 31522 / CIP 106686 / LMG 19005 / NCIMB 14063 / MR-1).